The following is a 472-amino-acid chain: Phosphoenolpyruvate carboxylase (472 aa).

It belongs to the PEPCase type 2 family. Homotetramer. Requires Mg(2+) as cofactor.

The catalysed reaction is oxaloacetate + phosphate = phosphoenolpyruvate + hydrogencarbonate. In terms of biological role, catalyzes the irreversible beta-carboxylation of phosphoenolpyruvate (PEP) to form oxaloacetate (OAA), a four-carbon dicarboxylic acid source for the tricarboxylic acid cycle. In Pyrococcus furiosus (strain ATCC 43587 / DSM 3638 / JCM 8422 / Vc1), this protein is Phosphoenolpyruvate carboxylase.